Here is a 315-residue protein sequence, read N- to C-terminus: Beta-ketoacyl-[acyl-carrier-protein] synthase III 2 (315 aa).

Residues Cys113 and His241 contribute to the active site. The tract at residues 242–246 is ACP-binding; sequence QANLR. Asn271 is an active-site residue.

It belongs to the thiolase-like superfamily. FabH family. As to quaternary structure, homodimer.

The protein resides in the cytoplasm. It carries out the reaction malonyl-[ACP] + acetyl-CoA + H(+) = 3-oxobutanoyl-[ACP] + CO2 + CoA. The protein operates within lipid metabolism; fatty acid biosynthesis. In terms of biological role, catalyzes the condensation reaction of fatty acid synthesis by the addition to an acyl acceptor of two carbons from malonyl-ACP. Catalyzes the first condensation reaction which initiates fatty acid synthesis and may therefore play a role in governing the total rate of fatty acid production. Possesses both acetoacetyl-ACP synthase and acetyl transacylase activities. Its substrate specificity determines the biosynthesis of branched-chain and/or straight-chain of fatty acids. The sequence is that of Beta-ketoacyl-[acyl-carrier-protein] synthase III 2 from Streptomyces avermitilis (strain ATCC 31267 / DSM 46492 / JCM 5070 / NBRC 14893 / NCIMB 12804 / NRRL 8165 / MA-4680).